Reading from the N-terminus, the 189-residue chain is Thymidine kinase (189 aa).

ATP-binding positions include 9-16 and 85-88; these read GTMNSGKT and DECQ. The active-site Proton acceptor is E86. Positions 143, 146, 180, and 183 each coordinate Zn(2+).

This sequence belongs to the thymidine kinase family. As to quaternary structure, homotetramer.

The protein resides in the cytoplasm. The catalysed reaction is thymidine + ATP = dTMP + ADP + H(+). The sequence is that of Thymidine kinase from Streptococcus agalactiae serotype Ia (strain ATCC 27591 / A909 / CDC SS700).